The following is a 664-amino-acid chain: Translation factor guf1, mitochondrial (664 aa).

Residues 1–43 (MRGCLQLARWLSAAPKGTAASLTRAPFGLANATRFFTNSAARA) constitute a mitochondrion transit peptide. One can recognise a tr-type G domain in the interval 66-246 (ERYRNFCIVA…TVVDKIPAPI (181 aa)). GTP-binding positions include 75–82 (AHVDHGKS), 139–143 (DTPGH), and 193–196 (NKVD).

This sequence belongs to the TRAFAC class translation factor GTPase superfamily. Classic translation factor GTPase family. LepA subfamily.

Its subcellular location is the mitochondrion inner membrane. It catalyses the reaction GTP + H2O = GDP + phosphate + H(+). Promotes mitochondrial protein synthesis. May act as a fidelity factor of the translation reaction, by catalyzing a one-codon backward translocation of tRNAs on improperly translocated ribosomes. Binds to mitochondrial ribosomes in a GTP-dependent manner. The polypeptide is Translation factor guf1, mitochondrial (guf1) (Aspergillus clavatus (strain ATCC 1007 / CBS 513.65 / DSM 816 / NCTC 3887 / NRRL 1 / QM 1276 / 107)).